Consider the following 219-residue polypeptide: Probable GTP-binding protein EngB (219 aa).

Residues 42–219 enclose the EngB-type G domain; that stretch reads SVPEIAFAGR…RTAVLEAVEL (178 aa). GTP contacts are provided by residues 50–57, 77–81, 97–100, 164–167, and 198–200; these read GRSNVGKS, GRTQE, DMPG, TKAD, and TSS. Residues Ser57 and Thr79 each coordinate Mg(2+).

This sequence belongs to the TRAFAC class TrmE-Era-EngA-EngB-Septin-like GTPase superfamily. EngB GTPase family. Mg(2+) serves as cofactor.

Its function is as follows. Necessary for normal cell division and for the maintenance of normal septation. In Sphingopyxis alaskensis (strain DSM 13593 / LMG 18877 / RB2256) (Sphingomonas alaskensis), this protein is Probable GTP-binding protein EngB.